The primary structure comprises 419 residues: Putative actin-fragmin kinase DDB_G0279609 (419 aa).

Positions 73 to 94 are disordered; the sequence is INNNNNSINNNNNNNNKNKNKN.

Belongs to the protein kinase superfamily. AFK Ser/Thr protein kinase family.

The polypeptide is Putative actin-fragmin kinase DDB_G0279609 (Dictyostelium discoideum (Social amoeba)).